We begin with the raw amino-acid sequence, 231 residues long: Enolase-phosphatase E1 (231 aa).

Belongs to the HAD-like hydrolase superfamily. MasA/MtnC family. As to quaternary structure, monomer. Mg(2+) is required as a cofactor.

It catalyses the reaction 5-methylsulfanyl-2,3-dioxopentyl phosphate + H2O = 1,2-dihydroxy-5-(methylsulfanyl)pent-1-en-3-one + phosphate. It participates in amino-acid biosynthesis; L-methionine biosynthesis via salvage pathway; L-methionine from S-methyl-5-thio-alpha-D-ribose 1-phosphate: step 3/6. Its pathway is amino-acid biosynthesis; L-methionine biosynthesis via salvage pathway; L-methionine from S-methyl-5-thio-alpha-D-ribose 1-phosphate: step 4/6. Its function is as follows. Bifunctional enzyme that catalyzes the enolization of 2,3-diketo-5-methylthiopentyl-1-phosphate (DK-MTP-1-P) into the intermediate 2-hydroxy-3-keto-5-methylthiopentenyl-1-phosphate (HK-MTPenyl-1-P), which is then dephosphorylated to form the acireductone 1,2-dihydroxy-3-keto-5-methylthiopentene (DHK-MTPene). The chain is Enolase-phosphatase E1 from Granulibacter bethesdensis (strain ATCC BAA-1260 / CGDNIH1).